The chain runs to 420 residues: UDP-N-acetylglucosamine 1-carboxyvinyltransferase (420 aa).

Phosphoenolpyruvate is bound at residue 22 to 23 (KN). Position 93 (R93) interacts with UDP-N-acetyl-alpha-D-glucosamine. The active-site Proton donor is C117. A 2-(S-cysteinyl)pyruvic acid O-phosphothioketal modification is found at C117. UDP-N-acetyl-alpha-D-glucosamine-binding positions include 162–165 (KVSV), D307, and I329.

It belongs to the EPSP synthase family. MurA subfamily.

The protein resides in the cytoplasm. It catalyses the reaction phosphoenolpyruvate + UDP-N-acetyl-alpha-D-glucosamine = UDP-N-acetyl-3-O-(1-carboxyvinyl)-alpha-D-glucosamine + phosphate. The protein operates within cell wall biogenesis; peptidoglycan biosynthesis. In terms of biological role, cell wall formation. Adds enolpyruvyl to UDP-N-acetylglucosamine. The sequence is that of UDP-N-acetylglucosamine 1-carboxyvinyltransferase from Actinobacillus succinogenes (strain ATCC 55618 / DSM 22257 / CCUG 43843 / 130Z).